The chain runs to 97 residues: Large ribosomal subunit protein eL21 (97 aa).

Positions 1–24 (MQKSEGFRSKTRYKLQKHPRQKGM) are disordered. Residues 9–21 (SKTRYKLQKHPRQ) show a composition bias toward basic residues.

Belongs to the eukaryotic ribosomal protein eL21 family.

This Methanococcus maripaludis (strain DSM 14266 / JCM 13030 / NBRC 101832 / S2 / LL) protein is Large ribosomal subunit protein eL21.